The primary structure comprises 275 residues: MQHDGYWVFSQVDPVAFSLGPLSVRWYGLMYLFGFAFAMWLAGRRADTPNSGWTRNEVSDLLFYGFLGVILGGRVGYVLFYNFDMFLADPIYLFKIWTGGMSFHGGLIGVITAMIWFAHKTKRHFFTVADFVAPLIPFGLGVGRIGNFLNGELWGRVTDVPWAIIFPEAGPEPRHPSQLYQFALEGVVLFIILNLFWRKNPPRGAISGLFLFCYGLFRFLVEFVRQPDSQLGLYFQEISMGQILSMPMIVAGALMVWAAYKRPQLFGNAGKEVKQ.

Helical transmembrane passes span 22–42 (LSVRWYGLMYLFGFAFAMWLA), 61–81 (LLFYGFLGVILGGRVGYVLFY), 96–116 (IWTGGMSFHGGLIGVITAMIW), 125–145 (FFTVADFVAPLIPFGLGVGRI), 177–197 (SQLYQFALEGVVLFIILNLFW), 204–224 (GAISGLFLFCYGLFRFLVEFV), and 238–258 (ISMGQILSMPMIVAGALMVWA). Arginine 144 serves as a coordination point for a 1,2-diacyl-sn-glycero-3-phospho-(1'-sn-glycerol).

This sequence belongs to the Lgt family.

It localises to the cell inner membrane. It catalyses the reaction L-cysteinyl-[prolipoprotein] + a 1,2-diacyl-sn-glycero-3-phospho-(1'-sn-glycerol) = an S-1,2-diacyl-sn-glyceryl-L-cysteinyl-[prolipoprotein] + sn-glycerol 1-phosphate + H(+). It participates in protein modification; lipoprotein biosynthesis (diacylglyceryl transfer). Its function is as follows. Catalyzes the transfer of the diacylglyceryl group from phosphatidylglycerol to the sulfhydryl group of the N-terminal cysteine of a prolipoprotein, the first step in the formation of mature lipoproteins. The sequence is that of Phosphatidylglycerol--prolipoprotein diacylglyceryl transferase from Aeromonas salmonicida (strain A449).